Reading from the N-terminus, the 502-residue chain is Glycerol kinase (502 aa).

Position 13 (Thr13) interacts with ADP. Thr13, Thr14, and Ser15 together coordinate ATP. Thr13 contributes to the sn-glycerol 3-phosphate binding site. Position 17 (Arg17) interacts with ADP. Sn-glycerol 3-phosphate contacts are provided by Arg83, Glu84, Tyr136, and Asp246. Glycerol is bound by residues Arg83, Glu84, Tyr136, Asp246, and Gln247. ADP contacts are provided by Thr268 and Gly311. ATP is bound by residues Thr268, Gly311, Gln315, and Gly412. ADP contacts are provided by Gly412 and Asn416.

Belongs to the FGGY kinase family.

It catalyses the reaction glycerol + ATP = sn-glycerol 3-phosphate + ADP + H(+). Its pathway is polyol metabolism; glycerol degradation via glycerol kinase pathway; sn-glycerol 3-phosphate from glycerol: step 1/1. Inhibited by fructose 1,6-bisphosphate (FBP). In terms of biological role, key enzyme in the regulation of glycerol uptake and metabolism. Catalyzes the phosphorylation of glycerol to yield sn-glycerol 3-phosphate. This is Glycerol kinase from Francisella tularensis subsp. tularensis (strain WY96-3418).